The following is a 186-amino-acid chain: Threonylcarbamoyl-AMP synthase (186 aa).

In terms of domain architecture, YrdC-like spans 2–186; sequence STEFEQAVAA…ARTGAVIRPS (185 aa).

The protein belongs to the SUA5 family. TsaC subfamily.

It localises to the cytoplasm. The enzyme catalyses L-threonine + hydrogencarbonate + ATP = L-threonylcarbamoyladenylate + diphosphate + H2O. Functionally, required for the formation of a threonylcarbamoyl group on adenosine at position 37 (t(6)A37) in tRNAs that read codons beginning with adenine. Catalyzes the conversion of L-threonine, HCO(3)(-)/CO(2) and ATP to give threonylcarbamoyl-AMP (TC-AMP) as the acyladenylate intermediate, with the release of diphosphate. The polypeptide is Threonylcarbamoyl-AMP synthase (Aeromonas salmonicida (strain A449)).